The following is a 223-amino-acid chain: ATP-dependent dethiobiotin synthetase BioD (223 aa).

Position 11 to 16 (11 to 16 (DIGKTY)) interacts with ATP. Position 15 (Thr15) interacts with Mg(2+). Lys36 is a catalytic residue. A substrate-binding site is contributed by Thr40. ATP-binding positions include Asp50, 110–113 (EGAG), and 174–175 (NN). The Mg(2+) site is built by Asp50 and Glu110.

This sequence belongs to the dethiobiotin synthetase family. In terms of assembly, homodimer. Mg(2+) serves as cofactor.

It is found in the cytoplasm. The catalysed reaction is (7R,8S)-7,8-diammoniononanoate + CO2 + ATP = (4R,5S)-dethiobiotin + ADP + phosphate + 3 H(+). It functions in the pathway cofactor biosynthesis; biotin biosynthesis; biotin from 7,8-diaminononanoate: step 1/2. In terms of biological role, catalyzes a mechanistically unusual reaction, the ATP-dependent insertion of CO2 between the N7 and N8 nitrogen atoms of 7,8-diaminopelargonic acid (DAPA, also called 7,8-diammoniononanoate) to form a ureido ring. This is ATP-dependent dethiobiotin synthetase BioD from Staphylococcus epidermidis (strain ATCC 35984 / DSM 28319 / BCRC 17069 / CCUG 31568 / BM 3577 / RP62A).